Consider the following 116-residue polypeptide: Appetite-regulating hormone (116 aa).

A signal peptide spans 1-23 (MPAPRTICSLLLLSMLWMDLAMA). Residue Ser26 is the site of O-decanoyl serine; alternate attachment. The O-hexanoyl serine; alternate moiety is linked to residue Ser26. Ser26 carries O-octanoyl serine; alternate lipidation. Residues 29–67 (SPEHQKLQRKEPKKPSGRLKPRALEGQFDPDVGSQEEGA) are disordered. The span at 31–42 (EHQKLQRKEPKK) shows a compositional bias: basic and acidic residues. A propeptide spans 51-74 (ALEGQFDPDVGSQEEGAEDELEIR) (removed in mature form). The residue at position 97 (Leu97) is a Leucine amide. A propeptide spans 98-116 (GKFLQDILWEEAEETLADE) (removed in mature form).

It belongs to the motilin family. In terms of processing, O-octanoylated by GOAT/MBOAT4. O-octanoylation is essential for ghrelin activity. Amidation of Leu-97 is essential for obestatin activity.

Its subcellular location is the secreted. Ghrelin is the ligand for growth hormone secretagogue receptor type 1 (GHSR). Induces the release of growth hormone from the pituitary. Has an appetite-stimulating effect, induces adiposity and stimulates gastric acid secretion. Involved in growth regulation. Functionally, obestatin may be the ligand for GPR39. May have an appetite-reducing effect resulting in decreased food intake. May reduce gastric emptying activity and jejunal motility. In Capra hircus (Goat), this protein is Appetite-regulating hormone (GHRL).